Reading from the N-terminus, the 685-residue chain is Translation initiation factor IF-2 (685 aa).

Residues 60-79 (ISLAKTREPSKEKTEAKKPP) are disordered. Over residues 64–79 (KTREPSKEKTEAKKPP) the composition is skewed to basic and acidic residues. Residues 175 to 352 (NRPPVVTVMG…DIRCIPDSPV (178 aa)) enclose the tr-type G domain. The G1 stretch occupies residues 184 to 191 (GHVDHGKT). 184-191 (GHVDHGKT) provides a ligand contact to GTP. A G2 region spans residues 209–213 (GITQS). A G3 region spans residues 230-233 (DTPG). GTP contacts are provided by residues 230–234 (DTPGH) and 284–287 (NKID). Positions 284–287 (NKID) are G4. Positions 321-323 (SAR) are G5.

It belongs to the TRAFAC class translation factor GTPase superfamily. Classic translation factor GTPase family. IF-2 subfamily.

It localises to the cytoplasm. In terms of biological role, one of the essential components for the initiation of protein synthesis. Protects formylmethionyl-tRNA from spontaneous hydrolysis and promotes its binding to the 30S ribosomal subunits. Also involved in the hydrolysis of GTP during the formation of the 70S ribosomal complex. This Fervidobacterium nodosum (strain ATCC 35602 / DSM 5306 / Rt17-B1) protein is Translation initiation factor IF-2.